The chain runs to 279 residues: Oxygen-dependent coproporphyrinogen-III oxidase (279 aa).

Serine 102 provides a ligand contact to substrate. A divalent metal cation contacts are provided by histidine 106 and histidine 116. Histidine 116 functions as the Proton donor in the catalytic mechanism. 118 to 120 contributes to the substrate binding site; that stretch reads NTR. A divalent metal cation is bound by residues histidine 149 and histidine 179. The tract at residues 244–279 is important for dimerization; that stretch reads YVEFNLLYDRGTKFGLMTDGNVEAILMSLPPEVKFN.

Belongs to the aerobic coproporphyrinogen-III oxidase family. Homodimer. It depends on a divalent metal cation as a cofactor.

The protein localises to the cytoplasm. The enzyme catalyses coproporphyrinogen III + O2 + 2 H(+) = protoporphyrinogen IX + 2 CO2 + 2 H2O. Its pathway is porphyrin-containing compound metabolism; protoporphyrin-IX biosynthesis; protoporphyrinogen-IX from coproporphyrinogen-III (O2 route): step 1/1. Its function is as follows. Involved in the heme biosynthesis. Catalyzes the aerobic oxidative decarboxylation of propionate groups of rings A and B of coproporphyrinogen-III to yield the vinyl groups in protoporphyrinogen-IX. This chain is Oxygen-dependent coproporphyrinogen-III oxidase, found in Rickettsia africae (strain ESF-5).